Reading from the N-terminus, the 500-residue chain is Probable cytosol aminopeptidase (500 aa).

Mn(2+) contacts are provided by Lys264 and Asp269. Residue Lys276 is part of the active site. Residues Asp287, Asp346, and Glu348 each contribute to the Mn(2+) site. The active site involves Arg350.

Belongs to the peptidase M17 family. Mn(2+) serves as cofactor.

Its subcellular location is the cytoplasm. It catalyses the reaction Release of an N-terminal amino acid, Xaa-|-Yaa-, in which Xaa is preferably Leu, but may be other amino acids including Pro although not Arg or Lys, and Yaa may be Pro. Amino acid amides and methyl esters are also readily hydrolyzed, but rates on arylamides are exceedingly low.. The catalysed reaction is Release of an N-terminal amino acid, preferentially leucine, but not glutamic or aspartic acids.. Its function is as follows. Presumably involved in the processing and regular turnover of intracellular proteins. Catalyzes the removal of unsubstituted N-terminal amino acids from various peptides. In Rhodopseudomonas palustris (strain TIE-1), this protein is Probable cytosol aminopeptidase.